A 172-amino-acid polypeptide reads, in one-letter code: Shikimate kinase (172 aa).

8–15 (GARASGKT) contributes to the ATP binding site.

It belongs to the shikimate kinase family.

It is found in the cytoplasm. The enzyme catalyses shikimate + ATP = 3-phosphoshikimate + ADP + H(+). The protein operates within metabolic intermediate biosynthesis; chorismate biosynthesis; chorismate from D-erythrose 4-phosphate and phosphoenolpyruvate: step 5/7. In Oleidesulfovibrio alaskensis (strain ATCC BAA-1058 / DSM 17464 / G20) (Desulfovibrio alaskensis), this protein is Shikimate kinase.